Reading from the N-terminus, the 493-residue chain is Probable NADPH:adrenodoxin oxidoreductase, mitochondrial (493 aa).

Residues serine 26, glutamate 48, leucine 56, and isoleucine 100 each contribute to the FAD site. NADP(+) is bound by residues 177-180, 223-224, and glutamate 235; these read NGNV and RR. FAD is bound by residues tryptophan 407 and 414 to 416; that span reads GVI. Glycine 414 contacts NADP(+).

Belongs to the ferredoxin--NADP reductase type 1 family. It depends on FAD as a cofactor.

It is found in the mitochondrion inner membrane. The enzyme catalyses 2 reduced [adrenodoxin] + NADP(+) + H(+) = 2 oxidized [adrenodoxin] + NADPH. Functionally, adrenodoxin reductase transfers electrons from NADPH to adrenodoxin, which is involved in heme A biosynthesis and in iron-sulfur cluster assembly. Involved in the electron transfer to heme A synthase COX15, a heme protein that catalyzes the conversion of heme O to heme A. Required for the de novo synthesis of Fe-S clusters on iron sulfur cluster assembly protein ISU1. Involved in electron delivery for Fe-S cluster synthesis. Essential for coenzyme Q biosynthesis. May be involved in the electron transfer required for the hydroxylation reaction performed by COQ6. May play a role in cellular and mitochondrial iron homeostasis. The chain is Probable NADPH:adrenodoxin oxidoreductase, mitochondrial from Saccharomyces cerevisiae (strain ATCC 204508 / S288c) (Baker's yeast).